A 354-amino-acid chain; its full sequence is Maleylacetate reductase 1 (354 aa).

Belongs to the iron-containing alcohol dehydrogenase family. In terms of assembly, homodimer.

The enzyme catalyses 3-oxoadipate + NAD(+) = maleylacetate + NADH + H(+). It catalyses the reaction 3-oxoadipate + NADP(+) = maleylacetate + NADPH + H(+). Its pathway is aromatic compound metabolism; 3-chlorocatechol degradation. The sequence is that of Maleylacetate reductase 1 (tfdFI) from Cupriavidus pinatubonensis (strain JMP 134 / LMG 1197) (Cupriavidus necator (strain JMP 134)).